A 133-amino-acid polypeptide reads, in one-letter code: Large ribosomal subunit protein uL14 (133 aa).

This sequence belongs to the universal ribosomal protein uL14 family. In terms of assembly, part of the 50S ribosomal subunit. Forms a cluster with proteins L3 and L24e, part of which may contact the 16S rRNA in 2 intersubunit bridges.

Binds to 23S rRNA. Forms part of two intersubunit bridges in the 70S ribosome. The protein is Large ribosomal subunit protein uL14 of Nanoarchaeum equitans (strain Kin4-M).